The chain runs to 810 residues: Calpain-3 (810 aa).

A compositionally biased stretch (low complexity) spans 9–27; sequence VAQQTAAGSVPSTTSTTTE. Residues 9–31 form a disordered region; it reads VAQQTAAGSVPSTTSTTTEGTGG. In terms of domain architecture, Calpain catalytic spans 68-410; that stretch reads LYEDPDFPPN…FTKLEICNLT (343 aa). Catalysis depends on residues Cys-123, His-327, and Asn-351. A domain III region spans residues 411–579; the sequence is PDTLEADKLQ…KRSLSEEVEN (169 aa). The tract at residues 578–639 is disordered; it reads ENMIEADRPS…SAKAREKSEE (62 aa). Positions 580–638 are linker; that stretch reads MIEADRPSKKKKGKPIIFVSDRANSNKELTTDEDAGKDGEKTHVDEKKRSSAKAREKSE. The span at 613–639 shows a compositional bias: basic and acidic residues; sequence DAGKDGEKTHVDEKKRSSAKAREKSEE. EF-hand domains lie at 638 to 672, 681 to 714, 711 to 746, and 776 to 810; these read EEETQFRNIFRQIAGDDMEICREELRNVLNNVVKK, FELESSRSMIALMDTDGSGKINFDEFRHLWDKIK, DKIKSWQKIFKHYDADHSGTINSYEMRNAVKDAGFR, and VRLDAMFRAFHAFDKDGDGIIKLNVLEWLQLTMYA. The tract at residues 639-809 is domain IV; sequence EETQFRNIFR…VLEWLQLTMY (171 aa). Residues Ala-651, Asp-654, Glu-656, Glu-661, Asp-694, Asp-696, Ser-698, Lys-700, Glu-705, Asp-724, Asp-726, Ser-728, Thr-730, Glu-735, Asp-789, Asp-791, Asp-793, and Ile-795 each coordinate Ca(2+).

It belongs to the peptidase C2 family. Homodimer; via EF-hand domain 4. Interacts with TTN/titin. Interacts with CMYA5; this interaction, which results in CMYA5 proteolysis, may protect CAPN3 from autolysis. Interacts with SIMC1. Interacts with UTP25; the interaction is required for CAPN3 translocation to the nucleolus. Skeletal muscle. Low levels in spleen, intestine and bone.

The protein localises to the cytoplasm. It localises to the nucleus. The protein resides in the nucleolus. It catalyses the reaction Broad endopeptidase activity.. With respect to regulation, activated by micromolar concentrations of calcium and inhibited by calpastatin. Functionally, calcium-regulated non-lysosomal thiol-protease. Proteolytically cleaves CTBP1. Mediates, with UTP25, the proteasome-independent degradation of p53/TP53. The sequence is that of Calpain-3 (CAPN3) from Gallus gallus (Chicken).